The sequence spans 275 residues: NH(3)-dependent NAD(+) synthetase (275 aa).

Residue 46–53 (GISGGQDS) coordinates ATP. Asp52 is a Mg(2+) binding site. Arg140 contributes to the deamido-NAD(+) binding site. An ATP-binding site is contributed by Thr160. Glu165 provides a ligand contact to Mg(2+). Deamido-NAD(+)-binding residues include Lys173 and Asp180. ATP-binding residues include Lys189 and Thr211. Deamido-NAD(+) is bound at residue 260 to 261 (HK).

This sequence belongs to the NAD synthetase family. Homodimer.

The enzyme catalyses deamido-NAD(+) + NH4(+) + ATP = AMP + diphosphate + NAD(+) + H(+). It participates in cofactor biosynthesis; NAD(+) biosynthesis; NAD(+) from deamido-NAD(+) (ammonia route): step 1/1. Functionally, catalyzes the ATP-dependent amidation of deamido-NAD to form NAD. Uses ammonia as a nitrogen source. This chain is NH(3)-dependent NAD(+) synthetase, found in Escherichia coli (strain K12 / MC4100 / BW2952).